The following is a 197-amino-acid chain: MKSNSVLIPMVVEQHSRGERSYDIYSRLLKERIIFITGTIEDNMASSIVAQMLFLEAESLDKDIFLYINSPGGIITSGMSIYDTMQFIKPDVNTICIGQACSMAAFLLSSGTKGKRSCLPNARIMIHQPLGGYQGQASDIAIHAEEINKMKKKLNKLMSLNTGQSIKKINKDTERDCFLSAHESIKYGLIDLILTQR.

Ser-102 serves as the catalytic Nucleophile. Residue His-127 is part of the active site.

Belongs to the peptidase S14 family. Fourteen ClpP subunits assemble into 2 heptameric rings which stack back to back to give a disk-like structure with a central cavity, resembling the structure of eukaryotic proteasomes.

Its subcellular location is the cytoplasm. It carries out the reaction Hydrolysis of proteins to small peptides in the presence of ATP and magnesium. alpha-casein is the usual test substrate. In the absence of ATP, only oligopeptides shorter than five residues are hydrolyzed (such as succinyl-Leu-Tyr-|-NHMec, and Leu-Tyr-Leu-|-Tyr-Trp, in which cleavage of the -Tyr-|-Leu- and -Tyr-|-Trp bonds also occurs).. Functionally, cleaves peptides in various proteins in a process that requires ATP hydrolysis. Has a chymotrypsin-like activity. Plays a major role in the degradation of misfolded proteins. This Buchnera aphidicola subsp. Schizaphis graminum (strain Sg) protein is ATP-dependent Clp protease proteolytic subunit.